The primary structure comprises 338 residues: 1-aminocyclopropane-1-carboxylate deaminase (338 aa).

Lysine 51 carries the N6-(pyridoxal phosphate)lysine modification. The active-site Nucleophile is serine 78.

Belongs to the ACC deaminase/D-cysteine desulfhydrase family. Homotrimer. Requires pyridoxal 5'-phosphate as cofactor.

The catalysed reaction is 1-aminocyclopropane-1-carboxylate + H2O = 2-oxobutanoate + NH4(+). Its function is as follows. Catalyzes a cyclopropane ring-opening reaction, the irreversible conversion of 1-aminocyclopropane-1-carboxylate (ACC) to ammonia and alpha-ketobutyrate. Allows growth on ACC as a nitrogen source. The protein is 1-aminocyclopropane-1-carboxylate deaminase of Paraburkholderia phytofirmans (strain DSM 17436 / LMG 22146 / PsJN) (Burkholderia phytofirmans).